A 429-amino-acid chain; its full sequence is Protein ORF66 (429 aa).

It belongs to the herpesviridae UL49 family. As to quaternary structure, interacts with ORF34.

Its subcellular location is the host nucleus. It localises to the host cytoplasm. In terms of biological role, participates in the expression of late viral mRNAs. In Homo sapiens (Human), this protein is Protein ORF66 (ORF66).